Here is a 452-residue protein sequence, read N- to C-terminus: Membrane-bound acylglycerophosphatidylinositol O-acyltransferase mboa-7 (452 aa).

The next 4 helical transmembrane spans lie at 4–24 (IIGL…FSFA), 53–73 (PRIA…AFAP), 79–99 (FYVF…HYFL), and 104–124 (VASH…GITF). An N-linked (GlcNAc...) asparagine glycan is attached at N137. The next 3 helical transmembrane spans lie at 153–173 (FAYF…YQML), 220–240 (AIWE…FVVF), and 244–264 (VYSA…GIYP). A glycan (N-linked (GlcNAc...) asparagine) is linked at N319. H350 is an active-site residue. Residues 354-374 (AGYFMSFGVVAMCAILEDVIF) traverse the membrane as a helical segment. A glycan (N-linked (GlcNAc...) asparagine) is linked at N414. Residues 421–441 (FWSSIYYWLPLLCVPFYIYSV) form a helical membrane-spanning segment.

Belongs to the membrane-bound acyltransferase family.

The protein resides in the membrane. It catalyses the reaction a 1-acyl-sn-glycero-3-phospho-(1D-myo-inositol) + an acyl-CoA = a 1,2-diacyl-sn-glycero-3-phospho-(1D-myo-inositol) + CoA. It carries out the reaction a fatty acyl-[ACP] + a 1-acyl-sn-glycero-3-phosphate = a 1,2-diacyl-sn-glycero-3-phosphate + holo-[ACP]. The protein operates within lipid metabolism; phospholipid metabolism. Functionally, acyltransferase which mediates the conversion of lysophosphatidylinositol (1-acylglycerophosphatidylinositol or LPI) into phosphatidylinositol (1,2-diacyl-sn-glycero-3-phosphoinositol or PI) (LPIAT activity). Prefers arachidonoyl-CoA or eicosapentaenoic acid (EPA) as the acyl donor. Prefers sn-2-LPI rather than sn-1-LPI as the acyl acceptor. Lysophospholipid acyltransferases (LPLATs) catalyze the reacylation step of the phospholipid remodeling pathway also known as the Lands cycle. The protein is Membrane-bound acylglycerophosphatidylinositol O-acyltransferase mboa-7 of Caenorhabditis briggsae.